The chain runs to 840 residues: Kinesin-like protein KIN-14J (840 aa).

Positions 1–74 are disordered; sequence MEADPAPSST…KGEEPVVSAE (74 aa). In terms of domain architecture, Kinesin motor spans 177 to 501; the sequence is NIRVFCRCRP…LNFASRVRAI (325 aa). Residue 260 to 267 coordinates ATP; sequence GQTGTGKT. Residues 517–594 are a coiled coil; the sequence is KLKQMTEKIR…KKAARDTARS (78 aa). Positions 581 to 593 are enriched in basic and acidic residues; that stretch reads LANEKKAARDTAR. A disordered region spans residues 581 to 617; that stretch reads LANEKKAARDTARSTKPPLAPMRQRPPLGRIGNHIPP.

It belongs to the TRAFAC class myosin-kinesin ATPase superfamily. Kinesin family. KIN-14 subfamily.

The polypeptide is Kinesin-like protein KIN-14J (Oryza sativa subsp. japonica (Rice)).